Consider the following 344-residue polypeptide: Probable dual-specificity RNA methyltransferase RlmN (344 aa).

The active-site Proton acceptor is the Glu-83. The Radical SAM core domain maps to 89 to 323; sequence YLDRKTICVS…VSVRRSRGKD (235 aa). Cys-96 and Cys-328 form a disulfide bridge. [4Fe-4S] cluster-binding residues include Cys-103, Cys-107, and Cys-110. S-adenosyl-L-methionine-binding positions include 153-154, Ser-185, 209-211, and Asn-285; these read GE and SLH. Cys-328 acts as the S-methylcysteine intermediate in catalysis.

The protein belongs to the radical SAM superfamily. RlmN family. Requires [4Fe-4S] cluster as cofactor.

The protein localises to the cytoplasm. It catalyses the reaction adenosine(2503) in 23S rRNA + 2 reduced [2Fe-2S]-[ferredoxin] + 2 S-adenosyl-L-methionine = 2-methyladenosine(2503) in 23S rRNA + 5'-deoxyadenosine + L-methionine + 2 oxidized [2Fe-2S]-[ferredoxin] + S-adenosyl-L-homocysteine. The enzyme catalyses adenosine(37) in tRNA + 2 reduced [2Fe-2S]-[ferredoxin] + 2 S-adenosyl-L-methionine = 2-methyladenosine(37) in tRNA + 5'-deoxyadenosine + L-methionine + 2 oxidized [2Fe-2S]-[ferredoxin] + S-adenosyl-L-homocysteine. In terms of biological role, specifically methylates position 2 of adenine 2503 in 23S rRNA and position 2 of adenine 37 in tRNAs. This Deinococcus geothermalis (strain DSM 11300 / CIP 105573 / AG-3a) protein is Probable dual-specificity RNA methyltransferase RlmN.